The following is a 329-amino-acid chain: MQFIDQARITVRAGRGGDGIMAFRREKYVPAGGPSGGDGGNGGNVVLEADGNLQTLLDFKYKRLFPAPDGRRGGPNRCTGASGKDLIIKVPCGTEVRHLYTGILLGDLTRSEDLLVVAFGGRGGLGNAHYLSNRNRAPEKFTEGRDGEEWFLQLELKLLAEVGIIGLPNAGKSTLISVLSAARPKIADYPFTTLVPNLGVVRRPSGDGTVFADIPGLIAGAAQGAGLGHDFLRHIERTRLLIHVLDGGAEDPVEDLLVVEKELVAYGHDLVERPRLLVLNKQELLDEQHQDQLVDALQAASGRSLILISAAMGLGLEGLLAQVWKELGV.

Residues M1 to L159 form the Obg domain. The 169-residue stretch at A160 to G328 folds into the OBG-type G domain. ATP-binding positions include G166 to S173, F191 to V195, D213 to G216, N280 to E283, and S309 to A311. Residues S173 and T193 each contribute to the Mg(2+) site.

Belongs to the TRAFAC class OBG-HflX-like GTPase superfamily. OBG GTPase family. As to quaternary structure, monomer. Requires Mg(2+) as cofactor.

The protein resides in the cytoplasm. Its function is as follows. An essential GTPase which binds GTP, GDP and possibly (p)ppGpp with moderate affinity, with high nucleotide exchange rates and a fairly low GTP hydrolysis rate. Plays a role in control of the cell cycle, stress response, ribosome biogenesis and in those bacteria that undergo differentiation, in morphogenesis control. The chain is GTPase Obg from Prochlorococcus marinus (strain MIT 9313).